The chain runs to 426 residues: Immunoglobulin mu Fc receptor (426 aa).

A signal peptide spans 1–16 (MNLWLWLLYFLPVSGT). Residues 24-121 (RLEVELGGSV…GKTQKVTLNV (98 aa)) form the Ig-like domain. Disulfide bonds link Cys-37–Cys-103 and Cys-49–Cys-58. Thr-91 carries the post-translational modification Phosphothreonine. A disordered region spans residues 178-212 (KTEAPPVHQPSTNTSVSRHPRVYGASSETPTKPSA). Residues 267-287 (FHILIPTFLGFLLLVLLGLVV) traverse the membrane as a helical segment. Disordered stretches follow at residues 306 to 346 (RRMR…REPD) and 401 to 426 (DSNDYINIPGLPHLPSKPPGPRPSRQ). Residues 415 to 426 (PSKPPGPRPSRQ) show a composition bias toward pro residues.

As to quaternary structure, interacts (via Ig-like domain) with IGHM (via CH4/Cmu4 domain), both secreted and membrane-bound IgM; the interaction is glycan-independent and multivalent theoretically involving up to eight binding sites for the IgM pentamer. Phosphorylated on both Tyr and Ser residues. In terms of processing, O-glycosylated. Sialylated. O-linked glycans regulate trafficking to the plasma membrane.

The protein localises to the cell membrane. Its subcellular location is the early endosome membrane. The protein resides in the golgi apparatus. It is found in the trans-Golgi network membrane. It localises to the lysosome membrane. Functionally, high-affinity Fc receptor for immunoglobulin M (IgM), both secreted and membrane-bound IgM. Primarily regulates IgM transport and homeostasis. In lymphoid cells, enables exocytosis of membrane-bound IgM on the plasma membrane as well as endocytosis of IgM-antigen complexes toward lysosomes for degradation. In mucosal epithelium, mediates retrotranscytosis of antigen-IgM complexes across mucosal M cells toward antigen-presenting cells in mucosal lymphoid tissues. Triggers costimulatory signaling and mediates most of IgM effector functions involved in B cell development and primary immune response to infection. Likely limits tonic IgM BCR signaling to self-antigens for proper negative selection of autoreactive B cells in the bone marrow and for the maintenance of regulatory B cell pool in peripheral lymphoid organs. Mediates antibody responses to T cell-dependent and T cell-independent antigens and promotes induction of an efficient neutralizing IgG response. Engages in cross-talk with antigen-receptor signaling via the non-canonical NF-kappa-B, MAP kinases and calcium signaling pathways. This is Immunoglobulin mu Fc receptor from Rattus norvegicus (Rat).